The following is a 340-amino-acid chain: UDP-3-O-(3-hydroxymyristoyl)glucosamine N-acyltransferase (340 aa).

Catalysis depends on histidine 239, which acts as the Proton acceptor.

The protein belongs to the transferase hexapeptide repeat family. LpxD subfamily. Homotrimer.

The catalysed reaction is a UDP-3-O-[(3R)-3-hydroxyacyl]-alpha-D-glucosamine + a (3R)-hydroxyacyl-[ACP] = a UDP-2-N,3-O-bis[(3R)-3-hydroxyacyl]-alpha-D-glucosamine + holo-[ACP] + H(+). It carries out the reaction UDP-3-O-[(3R)-3-hydroxytetradecanoyl]-alpha-D-glucosamine + (3R)-hydroxytetradecanoyl-[ACP] = UDP-2-N,3-O-bis[(3R)-3-hydroxytetradecanoyl]-alpha-D-glucosamine + holo-[ACP] + H(+). Its pathway is glycolipid biosynthesis; lipid IV(A) biosynthesis; lipid IV(A) from (3R)-3-hydroxytetradecanoyl-[acyl-carrier-protein] and UDP-N-acetyl-alpha-D-glucosamine: step 3/6. Functionally, catalyzes the N-acylation of UDP-3-O-(hydroxytetradecanoyl)glucosamine using 3-hydroxytetradecanoyl-ACP as the acyl donor. Is involved in the biosynthesis of lipid A, a phosphorylated glycolipid that anchors the lipopolysaccharide to the outer membrane of the cell. This is UDP-3-O-(3-hydroxymyristoyl)glucosamine N-acyltransferase from Sodalis glossinidius (strain morsitans).